The following is a 578-amino-acid chain: Signal peptide peptidase-like 2B (578 aa).

The signal sequence occupies residues 1-19 (MAAARLAAALLLLAAQVAC). At 20-168 (EFGVLRVVSQ…APSEPVMDYN (149 aa)) the chain is on the lumenal side. The region spanning 61 to 145 (LRDLSTTQLC…LLSHRDLQDI (85 aa)) is the PA domain. Asparagine 91 and asparagine 123 each carry an N-linked (GlcNAc...) asparagine glycan. The chain crosses the membrane as a helical span at residues 169-189 (MVIIFVMAVGTVAIGGYWAGS). At 190-216 (HDVKKYMKHKRDDGPEKQEDEAVDVTP) the chain is on the cytoplasmic side. A helical transmembrane segment spans residues 217–237 (VMICVFVVMCCFMLVLLYYFY). The Lumenal portion of the chain corresponds to 238 to 239 (DR). A helical transmembrane segment spans residues 240-260 (LVYVIIGIFCLASSTGLYSCL). Residues 261-286 (APFVRKLPFCTCRVPDNNLPYFHKRP) are Cytoplasmic-facing. Residues 287 to 307 (QARMLLLALFCVTVSVVWGIF) traverse the membrane as a helical segment. At 308 to 312 (RNEDQ) the chain is on the lumenal side. Residues 313 to 333 (WAWVLQDTLGIAFCLYMLKTI) traverse the membrane as a helical segment. The Cytoplasmic segment spans residues 334–341 (RLPTFKAC). A helical transmembrane segment spans residues 342–362 (TLLLLVLFIYDIFFVFITPFL). Aspartate 352 is a catalytic residue. Residues 363 to 405 (TKSGNSIMVEVATGPSNSSTHEKLPMVLKVPRLNTSPLSLCDR) lie on the Lumenal side of the membrane. The chain crosses the membrane as a helical span at residues 406–426 (PFSLLGFGDILVPGLLVAYCH). Aspartate 414 is a catalytic residue. The Cytoplasmic portion of the chain corresponds to 427 to 438 (RFDIQVQSSRIY). The helical transmembrane segment at 439 to 459 (FVACTIAYGLGLLVTFVALVL) threads the bilayer. The Lumenal portion of the chain corresponds to 460-463 (MQRG). Residues 464–484 (QPALLYLVPCTLLTSCTVALW) traverse the membrane as a helical segment. Positions 465–467 (PAL) match the PAL motif. The Cytoplasmic portion of the chain corresponds to 485-578 (RRELGAFWTG…IPVVKPETSA (94 aa)). Residues 502–578 (PQTPWAATQG…IPVVKPETSA (77 aa)) form a disordered region. Residues 520 to 529 (SSLSEQPPSE) are compositionally biased toward low complexity.

The protein belongs to the peptidase A22B family. Monomer. Homodimer. Interacts with ITM2B and TNF. Post-translationally, glycosylated.

It localises to the cell membrane. Its subcellular location is the golgi apparatus membrane. The protein resides in the lysosome membrane. The protein localises to the endosome membrane. It is found in the membrane. Intramembrane-cleaving aspartic protease (I-CLiP) that cleaves type II membrane signal peptides in the hydrophobic plane of the membrane. Functions in ITM2B and TNF processing. Catalyzes the intramembrane cleavage of the anchored fragment of shed TNF-alpha (TNF), which promotes the release of the intracellular domain (ICD) for signaling to the nucleus. May play a role in the regulation of innate and adaptive immunity. The protein is Signal peptide peptidase-like 2B of Mus musculus (Mouse).